The sequence spans 217 residues: tRNA (guanine-N(7)-)-methyltransferase (217 aa).

S-adenosyl-L-methionine contacts are provided by glutamate 44, glutamate 69, aspartate 96, and aspartate 118. Aspartate 118 is a catalytic residue. Residues lysine 122, aspartate 154, and 191 to 194 (TEYE) contribute to the substrate site.

It belongs to the class I-like SAM-binding methyltransferase superfamily. TrmB family.

It catalyses the reaction guanosine(46) in tRNA + S-adenosyl-L-methionine = N(7)-methylguanosine(46) in tRNA + S-adenosyl-L-homocysteine. It participates in tRNA modification; N(7)-methylguanine-tRNA biosynthesis. In terms of biological role, catalyzes the formation of N(7)-methylguanine at position 46 (m7G46) in tRNA. This Bacillus thuringiensis (strain Al Hakam) protein is tRNA (guanine-N(7)-)-methyltransferase.